Here is a 157-residue protein sequence, read N- to C-terminus: Glutamyl-tRNA(Gln) amidotransferase subunit C, mitochondrial (157 aa).

It belongs to the GatC family. In terms of assembly, subunit of the heterotrimeric GatCAB amidotransferase (AdT) complex, composed of A, B and C subunits.

It localises to the mitochondrion. The enzyme catalyses L-glutamyl-tRNA(Gln) + L-glutamine + ATP + H2O = L-glutaminyl-tRNA(Gln) + L-glutamate + ADP + phosphate + H(+). Allows the formation of correctly charged Gln-tRNA(Gln) through the transamidation of misacylated Glu-tRNA(Gln) in the mitochondria. The reaction takes place in the presence of glutamine and ATP through an activated gamma-phospho-Glu-tRNA(Gln). The chain is Glutamyl-tRNA(Gln) amidotransferase subunit C, mitochondrial from Drosophila virilis (Fruit fly).